The sequence spans 172 residues: Adenine phosphoribosyltransferase (172 aa).

The protein belongs to the purine/pyrimidine phosphoribosyltransferase family. As to quaternary structure, homodimer.

Its subcellular location is the cytoplasm. The enzyme catalyses AMP + diphosphate = 5-phospho-alpha-D-ribose 1-diphosphate + adenine. The protein operates within purine metabolism; AMP biosynthesis via salvage pathway; AMP from adenine: step 1/1. Catalyzes a salvage reaction resulting in the formation of AMP, that is energically less costly than de novo synthesis. The chain is Adenine phosphoribosyltransferase from Lactiplantibacillus plantarum (strain ATCC BAA-793 / NCIMB 8826 / WCFS1) (Lactobacillus plantarum).